The sequence spans 347 residues: 4-hydroxy-2-oxovalerate aldolase 4 (347 aa).

One can recognise a Pyruvate carboxyltransferase domain in the interval 9-259 (ITIVDTTLRD…DTGVDLFPLI (251 aa)). Substrate contacts are provided by residues 17 to 18 (RD), Ser171, and His198. Mn(2+) is bound at residue Asp18. Mn(2+)-binding residues include His198 and His200. Residue Tyr289 coordinates substrate.

The protein belongs to the 4-hydroxy-2-oxovalerate aldolase family.

It catalyses the reaction (S)-4-hydroxy-2-oxopentanoate = acetaldehyde + pyruvate. The protein is 4-hydroxy-2-oxovalerate aldolase 4 of Rhodococcus opacus (strain B4).